An 80-amino-acid chain; its full sequence is Waprin-Phi3 (80 aa).

An N-terminal signal peptide occupies residues 1–22 (MKPWILLLLAGLLILSTQLTTA). In terms of domain architecture, WAP spans 31–78 (PKVKPGECPKVKIPPDYPCNQYCVWDFDCEGNKKCCPVGCAKECFPPG). Cystine bridges form between cysteine 38–cysteine 66, cysteine 49–cysteine 70, cysteine 53–cysteine 65, and cysteine 59–cysteine 74.

The protein belongs to the venom waprin family. In terms of tissue distribution, expressed by the venom gland.

It localises to the secreted. Its function is as follows. Damages membranes of susceptible bacteria. Has no hemolytic activity. Not toxic to mice. Does not inhibit the proteinases elastase and cathepsin G. The protein is Waprin-Phi3 of Philodryas olfersii (Green snake).